Here is a 342-residue protein sequence, read N- to C-terminus: Holliday junction branch migration complex subunit RuvB (342 aa).

Residues 1-184 (MEENFDIREQ…FGINLHLEYY (184 aa)) are large ATPase domain (RuvB-L). ATP is bound by residues L23, R24, G65, K68, T69, T70, 131 to 133 (EDY), R174, Y184, and R221. T69 is a Mg(2+) binding site. The small ATPAse domain (RuvB-S) stretch occupies residues 185-255 (DDDVLTSIIR…IARFALEALN (71 aa)). Residues 258-342 (RYGLDEIDNK…YNSQKTLFDD (85 aa)) form a head domain (RuvB-H) region. DNA contacts are provided by R313 and R318.

Belongs to the RuvB family. In terms of assembly, homohexamer. Forms an RuvA(8)-RuvB(12)-Holliday junction (HJ) complex. HJ DNA is sandwiched between 2 RuvA tetramers; dsDNA enters through RuvA and exits via RuvB. An RuvB hexamer assembles on each DNA strand where it exits the tetramer. Each RuvB hexamer is contacted by two RuvA subunits (via domain III) on 2 adjacent RuvB subunits; this complex drives branch migration. In the full resolvosome a probable DNA-RuvA(4)-RuvB(12)-RuvC(2) complex forms which resolves the HJ.

It is found in the cytoplasm. It carries out the reaction ATP + H2O = ADP + phosphate + H(+). Its function is as follows. The RuvA-RuvB-RuvC complex processes Holliday junction (HJ) DNA during genetic recombination and DNA repair, while the RuvA-RuvB complex plays an important role in the rescue of blocked DNA replication forks via replication fork reversal (RFR). RuvA specifically binds to HJ cruciform DNA, conferring on it an open structure. The RuvB hexamer acts as an ATP-dependent pump, pulling dsDNA into and through the RuvAB complex. RuvB forms 2 homohexamers on either side of HJ DNA bound by 1 or 2 RuvA tetramers; 4 subunits per hexamer contact DNA at a time. Coordinated motions by a converter formed by DNA-disengaged RuvB subunits stimulates ATP hydrolysis and nucleotide exchange. Immobilization of the converter enables RuvB to convert the ATP-contained energy into a lever motion, pulling 2 nucleotides of DNA out of the RuvA tetramer per ATP hydrolyzed, thus driving DNA branch migration. The RuvB motors rotate together with the DNA substrate, which together with the progressing nucleotide cycle form the mechanistic basis for DNA recombination by continuous HJ branch migration. Branch migration allows RuvC to scan DNA until it finds its consensus sequence, where it cleaves and resolves cruciform DNA. In Phocaeicola vulgatus (strain ATCC 8482 / DSM 1447 / JCM 5826 / CCUG 4940 / NBRC 14291 / NCTC 11154) (Bacteroides vulgatus), this protein is Holliday junction branch migration complex subunit RuvB.